The following is a 773-amino-acid chain: MRLLLCLLLFSTLLINSTNACPGVITQACFCSEVHSGIVLDCSNSSASGILQIIRTNQAQVGLIQSLTMNQAELVELPPNFFSGLFIRRLDLSQNKIKKIDDAAFAGINPVLEEVVLNHNLIEKVPAAALAGLPNLLRLDLSNNSIVEIQEQEIFPNLNKLYDINLGSNKIFSIHTSTFQNVKNSIQTINLGHNNMTAVPSSAIRGLKQLQSLHLHKNRIEQLDALNFLNLPVLNLLNLAGNQIHELNRQAFLNVPSLRYLYLSGNKITKLTAYQFQTFEQLEMLDLTNNEIGAIPANSLSGLKQLRQLYLAHNKISNISSNAFTNSSIVVLVLSSNELKTLTAGIISGLPNLQQVSFRDNQIKTINRNAFYDAASLVMLDLAKNQLTEIAPTTFLAQLNLLLVDLSENKLPKTPYSAFNSRVGTVLLKENPLVCTENLHMLQQGTGVYVRDSPDIICGRKPTPKPEPVLVPIVTDSLISTQRPALVQIPKMQIHRNVHTTTGDQAPQIPSGAFQQIDLGKSRSLPRGHSRFILDKPSTREQSVEPTEELTPIQPIILPSREDEIRQSSMEAGTSQESVEATSQKIPSTTDIIDRPNVVLPFPVPFLKRGPNLSESKKVESTDMPSTSQVFHTLPPSILIEPGSTPKVAQPSTEANIKSEHIDEFALASSNSNEPTLQPRLEKSFFTTTIIFICVGTAVIVLVVVIAGLCISKHRQLQFENTYSDSSAARTSEYISTQYRQNSLRGTGGRVGRFEESPAWIYNPGSSYCNYYK.

An N-terminal signal peptide occupies residues 1 to 20 (MRLLLCLLLFSTLLINSTNA). The Extracellular portion of the chain corresponds to 21-689 (CPGVITQACF…RLEKSFFTTT (669 aa)). 16 LRR repeats span residues 61–84 (VGLIQSLTMNQAELVELPPNFFSG), 85–107 (LFIRRLDLSQNKIKKIDDAAFAG), 109–132 (NPVLEEVVLNHNLIEKVPAAALAG), 133–157 (LPNLLRLDLSNNSIVEIQEQEIFPN), 159–181 (NKLYDINLGSNKIFSIHTSTFQN), 183–206 (KNSIQTINLGHNNMTAVPSSAIRG), 207–230 (LKQLQSLHLHKNRIEQLDALNFLN), 231–254 (LPVLNLLNLAGNQIHELNRQAFLN), 256–278 (PSLRYLYLSGNKITKLTAYQFQT), 279–302 (FEQLEMLDLTNNEIGAIPANSLSG), 303–326 (LKQLRQLYLAHNKISNISSNAFTN), 328–349 (SIVVLVLSSNELKTLTAGIISG), 350–373 (LPNLQQVSFRDNQIKTINRNAFYD), 375–397 (ASLVMLDLAKNQLTEIAPTTFLA), 399–421 (LNLLLVDLSENKLPKTPYSAFNS), and 486–516 (LVQIPKMQIHRNVHTTTGDQAPQIPSGAFQQ). A helical membrane pass occupies residues 690–710 (IIFICVGTAVIVLVVVIAGLC). Residues 711-773 (ISKHRQLQFE…PGSSYCNYYK (63 aa)) lie on the Cytoplasmic side of the membrane.

In terms of tissue distribution, in L1 larvae, expressed in a subset of epithelial cells including epidermal, vulval and rectal cells and the excretory duct and pore. Absent from internal epithelia such as the gut and pharyngeal tubes. Transiently expressed in the excretory canal cell at the 1.5-fold embryonic stage but no longer visible in this cell at hatching.

Its subcellular location is the apical cell membrane. Functionally, required for apical extracellular matrix organization and epithelial junction maintenance. This is Leucine-rich repeat-containing protein let-4 (let-4) from Caenorhabditis elegans.